A 331-amino-acid chain; its full sequence is Olfactory receptor 7E178 (331 aa).

Residues 1-47 (MMDRYSFIMHQHRDDTVWCPSKIEEQNITRISEFHLMGLSDDLQLQP) lie on the Extracellular side of the membrane. A glycan (N-linked (GlcNAc...) asparagine) is linked at asparagine 27. Residues 48–68 (ILFGLFLSMYLVTLLGNLLII) form a helical membrane-spanning segment. The Cytoplasmic segment spans residues 69–80 (LTVSSDSHLHSP). The chain crosses the membrane as a helical span at residues 81 to 100 (MYFFLSNLSLADVSFTSTTL). Over 101–119 (PKMIVDIQTHNRAISYSGC) the chain is Extracellular. The cysteines at positions 119 and 201 are disulfide-linked. The helical transmembrane segment at 120 to 140 (LTQMSFFMLFGCLDSLLLTAM) threads the bilayer. Topologically, residues 141 to 164 (AYDRFVAICHPLHYQFIMNPRLCG) are cytoplasmic. The helical transmembrane segment at 165–185 (LLVFLSVLISLFVSQLHNSVV) threads the bilayer. Topologically, residues 186–218 (LQLTYFKSVDISHFFCDPSQLLNLACSDTFTNN) are extracellular. Residues 219–239 (IVMYFVGAISGFLPISGIFFS) form a helical membrane-spanning segment. Residues 240 to 266 (YYKIVSSILRMPSPGGKYKAFSTCGSH) are Cytoplasmic-facing. The chain crosses the membrane as a helical span at residues 267–287 (LSVVCLFYGTGLGVYLSSAVS). Over 288–293 (LSPRKG) the chain is Extracellular. A helical membrane pass occupies residues 294–314 (AVASIVYTVVTPMLNPFIYSL). At 315–331 (RNQDIKRAMWRLLRKTV) the chain is on the cytoplasmic side.

Belongs to the G-protein coupled receptor 1 family.

It localises to the cell membrane. Odorant receptor. This is Olfactory receptor 7E178 from Mus musculus (Mouse).